The following is a 771-amino-acid chain: Transcription factor TAS2 (771 aa).

Residues 33–53 (RSRAESASGPQQPSRRQPQTS) form a disordered region. Residues 42–51 (PQQPSRRQPQ) are compositionally biased toward low complexity. Positions 54–80 (CDLCRSRKIKCDRGTPCGNCRTRGLAC) form a DNA-binding region, zn(2)-C6 fungal-type. The tract at residues 125-150 (AVGGSGNAENGAHGDATPRVPLSGLE) is disordered.

It is found in the nucleus. Transcription factor; part of the gene cluster that mediates the biosynthesis of the toxin tenuazonic acid (TeA), an inhibitor of protein biosynthesis on ribosomes by suppressing the release of new protein. Directly regulates the expression of the hybrid PKS-NRPS synthetase TAS1 and the subsequent production of TeA. In Pyricularia oryzae (strain 70-15 / ATCC MYA-4617 / FGSC 8958) (Rice blast fungus), this protein is Transcription factor TAS2.